Consider the following 218-residue polypeptide: 3-oxo-tetronate 4-phosphate decarboxylase (218 aa).

Glutamate 86 (proton acceptor) is an active-site residue. The Zn(2+) site is built by glutamate 86, histidine 105, and histidine 107. Residue tyrosine 132 is the Proton donor of the active site. Histidine 172 is a Zn(2+) binding site.

It belongs to the aldolase class II family. AraD/FucA subfamily. It depends on Zn(2+) as a cofactor.

The catalysed reaction is 3-dehydro-4-O-phospho-D-erythronate + H(+) = dihydroxyacetone phosphate + CO2. The enzyme catalyses 3-dehydro-4-O-phospho-L-erythronate + H(+) = dihydroxyacetone phosphate + CO2. Catalyzes the decarboxylation of 3-oxo-tetronate 4-phosphate to dihydroxyacetone phosphate (DHAP) and CO(2). This chain is 3-oxo-tetronate 4-phosphate decarboxylase, found in Pectobacterium atrosepticum (strain SCRI 1043 / ATCC BAA-672) (Erwinia carotovora subsp. atroseptica).